Consider the following 104-residue polypeptide: Large ribosomal subunit protein uL24 (104 aa).

It belongs to the universal ribosomal protein uL24 family. Part of the 50S ribosomal subunit.

In terms of biological role, one of two assembly initiator proteins, it binds directly to the 5'-end of the 23S rRNA, where it nucleates assembly of the 50S subunit. Its function is as follows. One of the proteins that surrounds the polypeptide exit tunnel on the outside of the subunit. The protein is Large ribosomal subunit protein uL24 of Yersinia pseudotuberculosis serotype O:1b (strain IP 31758).